We begin with the raw amino-acid sequence, 1183 residues long: DNA-directed RNA polymerase subunit beta (1183 aa).

A compositionally biased stretch (acidic residues) spans 1149-1162 (DNEIEMADVDDEDA). The segment at 1149–1183 (DNEIEMADVDDEDATERKVDLQQKDVPETQKETTD) is disordered. A compositionally biased stretch (basic and acidic residues) spans 1163–1183 (TERKVDLQQKDVPETQKETTD).

It belongs to the RNA polymerase beta chain family. As to quaternary structure, the RNAP catalytic core consists of 2 alpha, 1 beta, 1 beta' and 1 omega subunit. When a sigma factor is associated with the core the holoenzyme is formed, which can initiate transcription.

The enzyme catalyses RNA(n) + a ribonucleoside 5'-triphosphate = RNA(n+1) + diphosphate. Functionally, DNA-dependent RNA polymerase catalyzes the transcription of DNA into RNA using the four ribonucleoside triphosphates as substrates. The chain is DNA-directed RNA polymerase subunit beta from Staphylococcus haemolyticus (strain JCSC1435).